Reading from the N-terminus, the 464-residue chain is Siroheme synthase (464 aa).

Positions 1–203 are precorrin-2 dehydrogenase /sirohydrochlorin ferrochelatase; that stretch reads MEYLPLFHNL…GQGAEAERLL (203 aa). NAD(+) contacts are provided by residues 22–23 and 43–44; these read EI and PE. Serine 128 bears the Phosphoserine mark. The interval 216–464 is uroporphyrinogen-III C-methyltransferase; it reads GEVYLVGAGP…AWFEGAQSEV (249 aa). Proline 225 contacts S-adenosyl-L-methionine. The Proton acceptor role is filled by aspartate 248. The active-site Proton donor is lysine 270. Residues 301 to 303, isoleucine 306, 331 to 332, methionine 383, and glycine 412 contribute to the S-adenosyl-L-methionine site; these read GGD and TA.

The protein in the N-terminal section; belongs to the precorrin-2 dehydrogenase / sirohydrochlorin ferrochelatase family. It in the C-terminal section; belongs to the precorrin methyltransferase family.

It catalyses the reaction uroporphyrinogen III + 2 S-adenosyl-L-methionine = precorrin-2 + 2 S-adenosyl-L-homocysteine + H(+). The catalysed reaction is precorrin-2 + NAD(+) = sirohydrochlorin + NADH + 2 H(+). It carries out the reaction siroheme + 2 H(+) = sirohydrochlorin + Fe(2+). Its pathway is cofactor biosynthesis; adenosylcobalamin biosynthesis; precorrin-2 from uroporphyrinogen III: step 1/1. It participates in cofactor biosynthesis; adenosylcobalamin biosynthesis; sirohydrochlorin from precorrin-2: step 1/1. The protein operates within porphyrin-containing compound metabolism; siroheme biosynthesis; precorrin-2 from uroporphyrinogen III: step 1/1. It functions in the pathway porphyrin-containing compound metabolism; siroheme biosynthesis; siroheme from sirohydrochlorin: step 1/1. Its pathway is porphyrin-containing compound metabolism; siroheme biosynthesis; sirohydrochlorin from precorrin-2: step 1/1. Its function is as follows. Multifunctional enzyme that catalyzes the SAM-dependent methylations of uroporphyrinogen III at position C-2 and C-7 to form precorrin-2 via precorrin-1. Then it catalyzes the NAD-dependent ring dehydrogenation of precorrin-2 to yield sirohydrochlorin. Finally, it catalyzes the ferrochelation of sirohydrochlorin to yield siroheme. The protein is Siroheme synthase of Pseudomonas fluorescens (strain ATCC BAA-477 / NRRL B-23932 / Pf-5).